The primary structure comprises 333 residues: 2-oxoglutarate-dependent dioxygenase ucsF (333 aa).

A Fe2OG dioxygenase domain is found at 174-296 (NASELRLNHY…RYSIAYLCKA (123 aa)). Fe cation-binding residues include H202, D204, and H264. Residue R287 participates in 2-oxoglutarate binding.

This sequence belongs to the iron/ascorbate-dependent oxidoreductase family. It depends on Fe(2+) as a cofactor.

It participates in mycotoxin biosynthesis. Functionally, 2-oxoglutarate-dependent dioxygenase; part of the gene cluster that mediates the biosynthesis of UCS1025A, a member of the pyrrolizidinone family that acts as a strong telomerase inhibitor and displays potent antibacterial and antitumor properties. These compounds share a hemiaminal-containing pyrrolizidinone core fused with a gamma-lactone, giving a furopyrrolizidine that is connected to a decalin fragment. The polyketide synthase module (PKS) of the PKS-NRPS ucsA is responsible for the synthesis of the polyketide backbone via the condensation of an acetyl-CoA starter unit with 6 malonyl-CoA units. The downstream nonribosomal peptide synthetase (NRPS) module then amidates the carboxyl end of the polyketide with a 2S,3S-methylproline derived from L-isoleucine by the 2-oxoglutarate-dependent dioxygenase ucsF which converts L-isoleucine to (4S,5S)-4-methylpyrroline-5-carboxylate that is further converted to 2S,3S-methylproline by the pyrroline-5-carboxylate reductase ucsG. Reductive release of the completed aminoacyl polyketide from the assembly line can form the 3-pyrrolin-2-one structure via an intramolecular Knoevenagel reaction. Because ucsA lacks a designated enoylreductase (ER) domain, the required activity is provided the enoyl reductase ucsL. This keto acyclic precursor is the substrate of the Diels-Alderase ucsH, that catalyzes the Diels-Alder cycloaddition. Oxidation of the 3S-methyl group to a carboxylate by the cytochrome P450 monooxygenase ucsK allows an oxa-Michael cyclization that might involve the reductase/dehydrogenase ucsI and which furnishes the furopyrrolizidine. The oxidase ucsJ likely plays a critical role in stereoselective reduction of the C5-C6 double bond to afford the required R-configured carboxylate group. Further enolization and oxidation at C5 by an unidentified enzyme affords the last intermediate that can undergo oxa-Michael cyclization to yield UCS1025A. This Acremonium sp protein is 2-oxoglutarate-dependent dioxygenase ucsF.